A 70-amino-acid polypeptide reads, in one-letter code: Small ribosomal subunit protein bS21 (70 aa).

A compositionally biased stretch (basic residues) spans 48–61 (KLAAAVKRQSKRLR). The segment at 48–70 (KLAAAVKRQSKRLRSQQLPPKMY) is disordered.

The protein belongs to the bacterial ribosomal protein bS21 family.

This Thiobacillus denitrificans (strain ATCC 25259 / T1) protein is Small ribosomal subunit protein bS21.